The primary structure comprises 305 residues: UDP-3-O-acyl-N-acetylglucosamine deacetylase (305 aa).

Zn(2+)-binding residues include His-79, His-238, and Asp-242. His-265 acts as the Proton donor in catalysis.

This sequence belongs to the LpxC family. Requires Zn(2+) as cofactor.

The enzyme catalyses a UDP-3-O-[(3R)-3-hydroxyacyl]-N-acetyl-alpha-D-glucosamine + H2O = a UDP-3-O-[(3R)-3-hydroxyacyl]-alpha-D-glucosamine + acetate. It functions in the pathway glycolipid biosynthesis; lipid IV(A) biosynthesis; lipid IV(A) from (3R)-3-hydroxytetradecanoyl-[acyl-carrier-protein] and UDP-N-acetyl-alpha-D-glucosamine: step 2/6. In terms of biological role, catalyzes the hydrolysis of UDP-3-O-myristoyl-N-acetylglucosamine to form UDP-3-O-myristoylglucosamine and acetate, the committed step in lipid A biosynthesis. The protein is UDP-3-O-acyl-N-acetylglucosamine deacetylase of Klebsiella pneumoniae subsp. pneumoniae (strain ATCC 700721 / MGH 78578).